Here is a 382-residue protein sequence, read N- to C-terminus: N-acetyldiaminopimelate deacetylase (382 aa).

Residue D73 is part of the active site. The active-site Proton acceptor is the E132.

The protein belongs to the peptidase M20A family. N-acetyldiaminopimelate deacetylase subfamily.

It carries out the reaction N-acetyl-(2S,6S)-2,6-diaminopimelate + H2O = (2S,6S)-2,6-diaminopimelate + acetate. Its pathway is amino-acid biosynthesis; L-lysine biosynthesis via DAP pathway; LL-2,6-diaminopimelate from (S)-tetrahydrodipicolinate (acetylase route): step 3/3. Its function is as follows. Catalyzes the conversion of N-acetyl-diaminopimelate to diaminopimelate and acetate. This chain is N-acetyldiaminopimelate deacetylase, found in Oenococcus oeni (strain ATCC BAA-331 / PSU-1).